A 709-amino-acid polypeptide reads, in one-letter code: MHAYSAAVLMGLLMVAEGAYVSTTACAHSAPNPTIQRYEPESIPTRLAPNRLLREPETTEASNEDRVVSIHAGIEKLSDLIKTGVSKVHGYLNLGPSATRDQPADEILRIYKLDDGIEKALVSPNLKAMESHVKELSTKNRKSEASVIGILTSHYGDDAVAKALVTAQKTVQSDDDVKTIWRLRNAQLSSWFSSDKSVDDVFTLLKLRHDDYLALASPKMEVLDDYMKLINRVTSGQETLLNVLTKGFGGEQTMAKLLLRGKEEPQTRELATALQNALLNKWVTDKFQPESVLKKLKLDRDLMNALSDPTRHTLTSYIAVFNTRNPGKKASFIGTLSAHYGDEMVANVLIAASRNGNTRRMANQLRTDQLSDWLNNQKSADEVFSLLKLRADLPNIDGALASGKLKLLEDYIKLFNREKAGDETLLKTLTTGFDGESNLAKALLTAEINPHSNKMVVKLQGELLNQWLLKGLKPESVLKNLGLDRGMKEVLSDPNRHFLTKYIWEYNSRNRFDRTSLILTLSAHYGDDVVARALAVAKGDSGLARTAAILQRQQLEGWLSSGKSADDVFTLLRIGADDFLPLNSQNLETLEDFVWLLNLKNRRIQTNIFTVVENKFGGDVQLARAVVKALNEADERGLRDSVGIASRYRSKLFGRWFDKSIEPKDVYAMILKVNGASADALEKSIVSRYTAFYKKRLAKAFTFDSPRRL.

An N-terminal signal peptide occupies residues Met-1–Gly-18. The RxLR-dEER signature appears at Arg-51–Arg-66.

The protein belongs to the RxLR effector family.

The protein resides in the secreted. It localises to the host cytoplasm. It is found in the host cytoskeleton. In terms of biological role, effector that enhances P.infestans colonization of Nicotiana benthamiana leaves. In Phytophthora infestans (strain T30-4) (Potato late blight agent), this protein is RxLR effector protein PITG_15110.